We begin with the raw amino-acid sequence, 65 residues long: Transcriptional regulatory protein SenS (65 aa).

The H-T-H motif DNA-binding region spans Arg-11–Lys-31.

To B.natto SenN.

Functionally, regulates the expression of extracellular-protein genes of Bacillus subtilis. The polypeptide is Transcriptional regulatory protein SenS (senS) (Bacillus subtilis (strain 168)).